Consider the following 334-residue polypeptide: NADH dehydrogenase (ubiquinone) complex I, assembly factor 6 homolog (334 aa).

Residues 1–11 constitute a mitochondrion transit peptide; sequence MRRLVRNWNCR.

It belongs to the NDUFAF6 family. In terms of assembly, associates with mitochondrial complex I assembly intermediates during its biogenesis. Forms a complex including sicily, ND-42 and Hsp83; the complex is necessary to chaperone ND-42 in the cytoplasm before mitochondrial import; the interaction between sicily and ND-42 is direct and occurs preferably between the unprocessed forms in the cytoplasm; the interaction with Hsp83 is direct. Interacts with ND-30; interaction is stronger between the unprocessed forms in the cytoplasm. As to expression, expressed in the ventral nerve cord, larval brain, motor neuron axons, imaginal disks, and muscles (at protein level).

Its subcellular location is the mitochondrion inner membrane. The protein resides in the cytoplasm. It is found in the cytosol. Its function is as follows. Involved in the assembly of mitochondrial NADH:ubiquinone oxidoreductase complex (Complex I) at early stages. Interacts with cytosolic Hsp90 to chaperone the Complex I subunit ND-42 in the cytoplasm. The chain is NADH dehydrogenase (ubiquinone) complex I, assembly factor 6 homolog from Drosophila melanogaster (Fruit fly).